We begin with the raw amino-acid sequence, 422 residues long: Cyclin-A2 (422 aa).

The residue at position 1 (Met1) is an N-acetylmethionine. The segment at 1-62 (MPGTSRHSGR…APQQKLKTRR (62 aa)) is disordered. Ser5 carries the post-translational modification Phosphoserine.

The protein belongs to the cyclin family. Cyclin AB subfamily. In terms of assembly, interacts with the CDK1 and CDK2 protein kinases to form serine/threonine kinase holoenzyme complexes. Interacts with CDK1 (hyperphosphorylated form in G1 and underphosphorylated forms in S and G2). Interacts with CDK2; the interaction increases from G1 to G2. Interacts (associated with CDK2 but not with CDK1) with SCAPER; regulates the activity of CCNA2/CDK2 by transiently maintaining CCNA2 in the cytoplasm. Forms a ternary complex with CDK2 and CDKN1B; CDKN1B inhibits the kinase activity of CDK2 through conformational rearrangements. Interacts with INCA1. As to quaternary structure, (Microbial infection) Interacts with mouse cytomegalovirus/MCMV kinase M97; this interaction sequesters CCNA2 to the cytoplasm. Polyubiquitinated via 'Lys-11'-linked ubiquitin by the anaphase-promoting complex (APC/C), leading to its degradation by the proteasome. Deubiquitinated and stabilized by USP37 enables entry into S phase. Ubiquitinated during the G1 phase by the SCF(FBXO31) complex, leading to its proteasomal degradation. Ubiquitous. In the testis, expressed in germ cells and in the ovary, in both germline and somatic cells.

It localises to the nucleus. The protein localises to the cytoplasm. Cyclin which controls both the G1/S and the G2/M transition phases of the cell cycle. Functions through the formation of specific serine/threonine kinase holoenzyme complexes with the cyclin-dependent protein kinases CDK1 and CDK2. The cyclin subunit confers the substrate specificity of these complexes and differentially interacts with and activates CDK1 and CDK2 throughout the cell cycle. In Mus musculus (Mouse), this protein is Cyclin-A2.